The chain runs to 351 residues: Phenylalanine--tRNA ligase alpha subunit (351 aa).

Glu266 is a binding site for Mg(2+).

The protein belongs to the class-II aminoacyl-tRNA synthetase family. Phe-tRNA synthetase alpha subunit type 1 subfamily. In terms of assembly, tetramer of two alpha and two beta subunits. It depends on Mg(2+) as a cofactor.

Its subcellular location is the cytoplasm. It carries out the reaction tRNA(Phe) + L-phenylalanine + ATP = L-phenylalanyl-tRNA(Phe) + AMP + diphosphate + H(+). This Anaplasma marginale (strain St. Maries) protein is Phenylalanine--tRNA ligase alpha subunit.